The primary structure comprises 469 residues: ATP synthase subunit beta (469 aa).

156–163 (GGAGVGKT) contacts ATP.

It belongs to the ATPase alpha/beta chains family. F-type ATPases have 2 components, CF(1) - the catalytic core - and CF(0) - the membrane proton channel. CF(1) has five subunits: alpha(3), beta(3), gamma(1), delta(1), epsilon(1). CF(0) has three main subunits: a(1), b(2) and c(9-12). The alpha and beta chains form an alternating ring which encloses part of the gamma chain. CF(1) is attached to CF(0) by a central stalk formed by the gamma and epsilon chains, while a peripheral stalk is formed by the delta and b chains.

The protein localises to the cell membrane. It carries out the reaction ATP + H2O + 4 H(+)(in) = ADP + phosphate + 5 H(+)(out). Functionally, produces ATP from ADP in the presence of a proton gradient across the membrane. The catalytic sites are hosted primarily by the beta subunits. This Lactococcus lactis subsp. lactis (strain IL1403) (Streptococcus lactis) protein is ATP synthase subunit beta.